Here is a 756-residue protein sequence, read N- to C-terminus: Putative DNA ligase 052L (756 aa).

Lys103 functions as the N6-AMP-lysine intermediate in the catalytic mechanism. A compositionally biased stretch (low complexity) spans 610–620 (PSAAGSASPCR). A disordered region spans residues 610-630 (PSAAGSASPCRPTKRRDDWFD). The 95-residue stretch at 648 to 742 (KKRPPMQGYV…LKRQRKCRAR (95 aa)) folds into the BRCT domain.

Belongs to the NAD-dependent DNA ligase family.

It carries out the reaction NAD(+) + (deoxyribonucleotide)n-3'-hydroxyl + 5'-phospho-(deoxyribonucleotide)m = (deoxyribonucleotide)n+m + AMP + beta-nicotinamide D-nucleotide.. Catalyzes the formation of phosphodiester linkages between 5'-phosphoryl and 3'-hydroxyl groups in double-stranded DNA using NAD as a coenzyme and as the energy source for the reaction. This is Putative DNA ligase 052L from Invertebrate iridescent virus 3 (IIV-3).